Consider the following 513-residue polypeptide: Bifunctional purine biosynthesis protein PurH (513 aa).

The region spanning 1–144 (MSKRALISVS…KNHERVGIVV (144 aa)) is the MGS-like domain.

The protein belongs to the PurH family.

It catalyses the reaction (6R)-10-formyltetrahydrofolate + 5-amino-1-(5-phospho-beta-D-ribosyl)imidazole-4-carboxamide = 5-formamido-1-(5-phospho-D-ribosyl)imidazole-4-carboxamide + (6S)-5,6,7,8-tetrahydrofolate. The enzyme catalyses IMP + H2O = 5-formamido-1-(5-phospho-D-ribosyl)imidazole-4-carboxamide. The protein operates within purine metabolism; IMP biosynthesis via de novo pathway; 5-formamido-1-(5-phospho-D-ribosyl)imidazole-4-carboxamide from 5-amino-1-(5-phospho-D-ribosyl)imidazole-4-carboxamide (10-formyl THF route): step 1/1. Its pathway is purine metabolism; IMP biosynthesis via de novo pathway; IMP from 5-formamido-1-(5-phospho-D-ribosyl)imidazole-4-carboxamide: step 1/1. This is Bifunctional purine biosynthesis protein PurH from Moorella thermoacetica (strain ATCC 39073 / JCM 9320).